We begin with the raw amino-acid sequence, 509 residues long: Cytochrome P450 monooxygenase cpaH (509 aa).

Asparagine 15 carries N-linked (GlcNAc...) asparagine glycosylation. Residues 31–51 (TTILLIGVTYCILVGIYRVTL) form a helical membrane-spanning segment. Asparagine 306 and asparagine 412 each carry an N-linked (GlcNAc...) asparagine glycan. Residue cysteine 453 participates in heme binding.

It belongs to the cytochrome P450 family. Heme is required as a cofactor.

The protein localises to the membrane. The protein operates within secondary metabolite biosynthesis. Functionally, cytochrome P450 monooxygenase; part of the gene cluster that mediates the biosynthesis of the fungal neurotoxin cyclopiazonic acid (CPA), a nanomolar inhibitor of Ca(2+)-ATPase with a unique pentacyclic indole tetramic acid scaffold. The hybrid two module polyketide synthase-nonribosomal peptide synthetase (PKS-NRPS) cpaS incorporates acetyl-CoA, malonyl-CoA, and tryptophan (Trp) and utilizes a C-terminal redox-incompetent reductase domain to make and release the tryptophan tetramic acid, cyclo-acetoacetyl-L-tryptophan (c-AATrp), as the first intermediate in the pathway. CpaS catalyzes a Dieckmann-type cyclization on the N-acetoacetyl-Trp intermediate bound in thioester linkage to the phosphopantetheinyl arm of the T domain to form and release c-AATrp. CpaD then regiospecifically dimethylallylates c-AATrp to form beta-cyclopiazonic acid. CpaD discriminates against free Trp but accepts tryptophan-containing thiohydantoins, diketopiperazines, and linear peptides as substrates for C4-prenylation and also acts as a regiospecific O-dimethylallyltransferase (DMAT) on a tyrosine-derived tetramic acid. The beta-cyclopiazonate dehydrogenase cpaO then carries out the dehydrogenation of beta-CPA to yield an unstable enimine product, which is captured by intramolecular cyclization to create the pentacyclic fused scaffold of alpha-cyclopiazonate. Finally, the cytochrome P450 monooxygenase cpaH mediates the conversion of CPA into the less toxic 2-oxocyclopiazonic acid, the end product of the CPA pathway in A.oryza. This chain is Cytochrome P450 monooxygenase cpaH, found in Aspergillus oryzae (Yellow koji mold).